The sequence spans 89 residues: Large ribosomal subunit protein uL23cz/uL23cy (89 aa).

The protein belongs to the universal ribosomal protein uL23 family. Part of the 50S ribosomal subunit.

It localises to the plastid. Its subcellular location is the chloroplast. In terms of biological role, binds to 23S rRNA. The chain is Large ribosomal subunit protein uL23cz/uL23cy (rpl23-A) from Pelargonium hortorum (Common geranium).